Consider the following 333-residue polypeptide: MATSMLGSVRGPRPFGLANLFHRQPPRDAWERVRRLPGPSAVRRSVAAASGPGIPGSHLYCLELLRKRDYESYLCSLLFPAECQRSASALRAFNVELAQVKDSVSEKTIGLMRMQFWKKAVEDMYCDNPPHQPVAIELWKAVKKHNLTKRWLMRIIDEREKNLDDKAYRSMQELENYAENTQGSLLYLTLEVLGVKDLHADHAASHIGKAQGIVTCLRATPYHSSRRQVFLPMDVCVQHGVSQEDFLRRNQDKNVRDVVYDIASQAHLHLKHARSFHRSVPAEAFPAFLQTVSLEDYLKKIQRVDFDIFHPSLQQKNMLLPLSLYIQSWRKRY.

The N-terminal 44 residues, 1–44, are a transit peptide targeting the mitochondrion; it reads MATSMLGSVRGPRPFGLANLFHRQPPRDAWERVRRLPGPSAVRR.

It belongs to the NDUFAF6 family.

The protein localises to the mitochondrion inner membrane. Functionally, involved in the assembly of mitochondrial NADH:ubiquinone oxidoreductase complex (complex I) at early stages. May play a role in the biogenesis of complex I subunit MT-ND1. This chain is NADH dehydrogenase (ubiquinone) complex I, assembly factor 6 (Ndufaf6), found in Mus musculus (Mouse).